Reading from the N-terminus, the 513-residue chain is ATP synthase subunit alpha (513 aa).

169–176 (GDRQTGKT) lines the ATP pocket.

This sequence belongs to the ATPase alpha/beta chains family. F-type ATPases have 2 components, CF(1) - the catalytic core - and CF(0) - the membrane proton channel. CF(1) has five subunits: alpha(3), beta(3), gamma(1), delta(1), epsilon(1). CF(0) has three main subunits: a(1), b(2) and c(9-12). The alpha and beta chains form an alternating ring which encloses part of the gamma chain. CF(1) is attached to CF(0) by a central stalk formed by the gamma and epsilon chains, while a peripheral stalk is formed by the delta and b chains.

Its subcellular location is the cell inner membrane. The enzyme catalyses ATP + H2O + 4 H(+)(in) = ADP + phosphate + 5 H(+)(out). Its function is as follows. Produces ATP from ADP in the presence of a proton gradient across the membrane. The alpha chain is a regulatory subunit. The sequence is that of ATP synthase subunit alpha from Shewanella putrefaciens (strain CN-32 / ATCC BAA-453).